A 115-amino-acid polypeptide reads, in one-letter code: Large ribosomal subunit protein bL20c (115 aa).

The protein belongs to the bacterial ribosomal protein bL20 family.

It localises to the plastid. The protein localises to the chloroplast. In terms of biological role, binds directly to 23S ribosomal RNA and is necessary for the in vitro assembly process of the 50S ribosomal subunit. It is not involved in the protein synthesizing functions of that subunit. The chain is Large ribosomal subunit protein bL20c from Chlorokybus atmophyticus (Soil alga).